We begin with the raw amino-acid sequence, 475 residues long: Sulfate adenylyltransferase subunit 1 (475 aa).

Residues 25-239 (KSLLRFLTCG…EVLETVEIQR (215 aa)) form the tr-type G domain. The segment at 34-41 (GSVDDGKS) is G1. 34-41 (GSVDDGKS) is a GTP binding site. The G2 stretch occupies residues 92–96 (GITID). The interval 113–116 (DTPG) is G3. Residues 113-117 (DTPGH) and 168-171 (NKMD) each bind GTP. The interval 168–171 (NKMD) is G4. The G5 stretch occupies residues 206–208 (SAL).

It belongs to the TRAFAC class translation factor GTPase superfamily. Classic translation factor GTPase family. CysN/NodQ subfamily. Heterodimer composed of CysD, the smaller subunit, and CysN.

It carries out the reaction sulfate + ATP + H(+) = adenosine 5'-phosphosulfate + diphosphate. It functions in the pathway sulfur metabolism; hydrogen sulfide biosynthesis; sulfite from sulfate: step 1/3. In terms of biological role, with CysD forms the ATP sulfurylase (ATPS) that catalyzes the adenylation of sulfate producing adenosine 5'-phosphosulfate (APS) and diphosphate, the first enzymatic step in sulfur assimilation pathway. APS synthesis involves the formation of a high-energy phosphoric-sulfuric acid anhydride bond driven by GTP hydrolysis by CysN coupled to ATP hydrolysis by CysD. The polypeptide is Sulfate adenylyltransferase subunit 1 (Escherichia coli O17:K52:H18 (strain UMN026 / ExPEC)).